The sequence spans 216 residues: Putative cat eye syndrome critical region protein 9 (216 aa).

Positions 1-23 (MQSHLAPLACAAAAGRAGGSCQA) are cleaved as a signal peptide. N-linked (GlcNAc...) asparagine glycosylation occurs at N148.

In terms of tissue distribution, ubiquitously expressed with higher expression in heart.

The protein localises to the secreted. The chain is Putative cat eye syndrome critical region protein 9 (CECR9) from Homo sapiens (Human).